The sequence spans 235 residues: Ferric nitrobindin-like protein (235 aa).

A disordered region spans residues 1 to 59; that stretch reads MSDLASEGSDPAERASEHSNGNAPADRPARRSGDQAVADAAERAKATGSRNIPVLPDLP. The GXWXGXG motif lies at 85 to 91; that stretch reads GVWRGEG.

The protein belongs to the nitrobindin family.

The sequence is that of Ferric nitrobindin-like protein from Nocardia farcinica (strain IFM 10152).